The chain runs to 514 residues: Maturase K (514 aa).

The protein belongs to the intron maturase 2 family. MatK subfamily.

Its subcellular location is the plastid. The protein resides in the chloroplast. Its function is as follows. Usually encoded in the trnK tRNA gene intron. Probably assists in splicing its own and other chloroplast group II introns. The polypeptide is Maturase K (Acer monspessulanum (Montpellier maple)).